The sequence spans 313 residues: MKWIEVTIRTTTEAVEAVANVLYDAGVSGVAIEDPNDIVFVNNDEKTWDYVDEALIDFEQGALVKGYLPESSDLVEKIEIIKNSIAALPEFGLNIGAGEVSTLEVNEEDWSTSWKQYYKPTKIGNKIVIKPTWEEYIAQEGDMVIEMDPGMAFGTGTHETTMMCVEQLEKYISKDTTVFDIGTGSGILAIVGAKLGAKKAIGVDFDPVAVTVANENVRANKVENIVEIKQGNLMDVVSEKADVVVANIIAEVIVILSEDIKSFLNKNGIFISSGIILDKIDTVKESLVKNGLEVIHVETMGEWAAIVSKVKGA.

S-adenosyl-L-methionine is bound by residues Thr161, Gly182, Asp204, and Asn247.

It belongs to the methyltransferase superfamily. PrmA family.

The protein localises to the cytoplasm. It catalyses the reaction L-lysyl-[protein] + 3 S-adenosyl-L-methionine = N(6),N(6),N(6)-trimethyl-L-lysyl-[protein] + 3 S-adenosyl-L-homocysteine + 3 H(+). Functionally, methylates ribosomal protein L11. The chain is Ribosomal protein L11 methyltransferase from Alkaliphilus oremlandii (strain OhILAs) (Clostridium oremlandii (strain OhILAs)).